The primary structure comprises 397 residues: Dual-specificity RNA methyltransferase RlmN (397 aa).

Residue glutamate 130 is the Proton acceptor of the active site. The Radical SAM core domain occupies 138-377; it reads VEDRGAVCIS…ASPIRTPRGR (240 aa). Residues cysteine 145 and cysteine 383 are joined by a disulfide bond. 3 residues coordinate [4Fe-4S] cluster: cysteine 152, cysteine 156, and cysteine 159. S-adenosyl-L-methionine-binding positions include 209-210, serine 241, 263-265, and asparagine 340; these read GE and SLH. The active-site S-methylcysteine intermediate is cysteine 383.

It belongs to the radical SAM superfamily. RlmN family. The cofactor is [4Fe-4S] cluster.

It is found in the cytoplasm. It carries out the reaction adenosine(2503) in 23S rRNA + 2 reduced [2Fe-2S]-[ferredoxin] + 2 S-adenosyl-L-methionine = 2-methyladenosine(2503) in 23S rRNA + 5'-deoxyadenosine + L-methionine + 2 oxidized [2Fe-2S]-[ferredoxin] + S-adenosyl-L-homocysteine. The catalysed reaction is adenosine(37) in tRNA + 2 reduced [2Fe-2S]-[ferredoxin] + 2 S-adenosyl-L-methionine = 2-methyladenosine(37) in tRNA + 5'-deoxyadenosine + L-methionine + 2 oxidized [2Fe-2S]-[ferredoxin] + S-adenosyl-L-homocysteine. Functionally, specifically methylates position 2 of adenine 2503 in 23S rRNA and position 2 of adenine 37 in tRNAs. m2A2503 modification seems to play a crucial role in the proofreading step occurring at the peptidyl transferase center and thus would serve to optimize ribosomal fidelity. The sequence is that of Dual-specificity RNA methyltransferase RlmN from Granulibacter bethesdensis (strain ATCC BAA-1260 / CGDNIH1).